A 367-amino-acid polypeptide reads, in one-letter code: WD repeat-containing protein 31 (367 aa).

WD repeat units lie at residues 53-90 (AFQE…AYNW), 94-132 (NVVK…MWDL), 137-175 (QPRQ…LWDV), 179-217 (QSVE…LWDS), 221-264 (QVAH…LWDL), 269-311 (NRIC…IWNQ), and 315-353 (ACLF…LLRM).

The protein is WD repeat-containing protein 31 (WDR31) of Homo sapiens (Human).